The chain runs to 255 residues: Acetylglutamate kinase (255 aa).

Residues 40–41 (GG), arginine 62, and asparagine 153 each bind substrate.

The protein belongs to the acetylglutamate kinase family. ArgB subfamily.

It is found in the cytoplasm. It catalyses the reaction N-acetyl-L-glutamate + ATP = N-acetyl-L-glutamyl 5-phosphate + ADP. The protein operates within amino-acid biosynthesis; L-arginine biosynthesis; N(2)-acetyl-L-ornithine from L-glutamate: step 2/4. Functionally, catalyzes the ATP-dependent phosphorylation of N-acetyl-L-glutamate. The chain is Acetylglutamate kinase from Bacillus cereus (strain ATCC 10987 / NRS 248).